The sequence spans 352 residues: Chorismate synthase (352 aa).

Residues R48 and R54 each contribute to the NADP(+) site. FMN-binding positions include 125 to 127 (RAS), 238 to 239 (NA), A278, 293 to 297 (KPASS), and R319.

It belongs to the chorismate synthase family. In terms of assembly, homotetramer. FMNH2 is required as a cofactor.

It catalyses the reaction 5-O-(1-carboxyvinyl)-3-phosphoshikimate = chorismate + phosphate. The protein operates within metabolic intermediate biosynthesis; chorismate biosynthesis; chorismate from D-erythrose 4-phosphate and phosphoenolpyruvate: step 7/7. Catalyzes the anti-1,4-elimination of the C-3 phosphate and the C-6 proR hydrogen from 5-enolpyruvylshikimate-3-phosphate (EPSP) to yield chorismate, which is the branch point compound that serves as the starting substrate for the three terminal pathways of aromatic amino acid biosynthesis. This reaction introduces a second double bond into the aromatic ring system. The sequence is that of Chorismate synthase from Coxiella burnetii (strain RSA 493 / Nine Mile phase I).